A 715-amino-acid polypeptide reads, in one-letter code: Fatty acid oxidation complex subunit alpha (715 aa).

The interval 1 to 190 is enoyl-CoA hydratase; that stretch reads MTTTSAFMLS…KAGLVDDVVP (190 aa). The segment at 306–714 is 3-hydroxyacyl-CoA dehydrogenase; that stretch reads GPLNSVGILG…FWTNGETDQG (409 aa).

This sequence in the N-terminal section; belongs to the enoyl-CoA hydratase/isomerase family. The protein in the central section; belongs to the 3-hydroxyacyl-CoA dehydrogenase family. As to quaternary structure, heterotetramer of two alpha chains (FadJ) and two beta chains (FadI).

The protein localises to the cytoplasm. The catalysed reaction is a (3S)-3-hydroxyacyl-CoA = a (2E)-enoyl-CoA + H2O. It catalyses the reaction a 4-saturated-(3S)-3-hydroxyacyl-CoA = a (3E)-enoyl-CoA + H2O. It carries out the reaction a (3S)-3-hydroxyacyl-CoA + NAD(+) = a 3-oxoacyl-CoA + NADH + H(+). The enzyme catalyses (3S)-3-hydroxybutanoyl-CoA = (3R)-3-hydroxybutanoyl-CoA. Its pathway is lipid metabolism; fatty acid beta-oxidation. Catalyzes the formation of a hydroxyacyl-CoA by addition of water on enoyl-CoA. Also exhibits 3-hydroxyacyl-CoA epimerase and 3-hydroxyacyl-CoA dehydrogenase activities. The polypeptide is Fatty acid oxidation complex subunit alpha (Salmonella typhi).